We begin with the raw amino-acid sequence, 250 residues long: Triosephosphate isomerase (250 aa).

A substrate-binding site is contributed by 9–11 (NWK). H95 acts as the Electrophile in catalysis. The active-site Proton acceptor is E167. Residues G173, S212, and 233 to 234 (GG) each bind substrate.

The protein belongs to the triosephosphate isomerase family. In terms of assembly, homodimer.

It is found in the cytoplasm. The enzyme catalyses D-glyceraldehyde 3-phosphate = dihydroxyacetone phosphate. It participates in carbohydrate biosynthesis; gluconeogenesis. Its pathway is carbohydrate degradation; glycolysis; D-glyceraldehyde 3-phosphate from glycerone phosphate: step 1/1. Involved in the gluconeogenesis. Catalyzes stereospecifically the conversion of dihydroxyacetone phosphate (DHAP) to D-glyceraldehyde-3-phosphate (G3P). This chain is Triosephosphate isomerase, found in Nitrosococcus oceani (strain ATCC 19707 / BCRC 17464 / JCM 30415 / NCIMB 11848 / C-107).